We begin with the raw amino-acid sequence, 121 residues long: Small ribosomal subunit protein bS6 (121 aa).

The segment at 94–121 (KAETGPSAVMKRVEKEEARKSSQQETAA) is disordered. Over residues 104-115 (KRVEKEEARKSS) the composition is skewed to basic and acidic residues.

The protein belongs to the bacterial ribosomal protein bS6 family.

Its function is as follows. Binds together with bS18 to 16S ribosomal RNA. This is Small ribosomal subunit protein bS6 from Leptothrix cholodnii (strain ATCC 51168 / LMG 8142 / SP-6) (Leptothrix discophora (strain SP-6)).